The sequence spans 210 residues: Chaperone protein TorD (210 aa).

Belongs to the TorD/DmsD family. TorD subfamily.

Its subcellular location is the cytoplasm. Its function is as follows. Involved in the biogenesis of TorA. Acts on TorA before the insertion of the molybdenum cofactor and, as a result, probably favors a conformation of the apoenzyme that is competent for acquiring the cofactor. The chain is Chaperone protein TorD from Salmonella choleraesuis (strain SC-B67).